The primary structure comprises 455 residues: UDP-N-acetylmuramoylalanine--D-glutamate ligase (455 aa).

ATP is bound at residue 112-118 (GTNGKTT).

This sequence belongs to the MurCDEF family.

The protein resides in the cytoplasm. It carries out the reaction UDP-N-acetyl-alpha-D-muramoyl-L-alanine + D-glutamate + ATP = UDP-N-acetyl-alpha-D-muramoyl-L-alanyl-D-glutamate + ADP + phosphate + H(+). It participates in cell wall biogenesis; peptidoglycan biosynthesis. Functionally, cell wall formation. Catalyzes the addition of glutamate to the nucleotide precursor UDP-N-acetylmuramoyl-L-alanine (UMA). This chain is UDP-N-acetylmuramoylalanine--D-glutamate ligase, found in Trichormus variabilis (strain ATCC 29413 / PCC 7937) (Anabaena variabilis).